The chain runs to 158 residues: Transcription elongation factor GreA (158 aa).

A coiled-coil region spans residues 45 to 72 (AEYHAAREQQSFIEGRIKQLEGELSHAE).

The protein belongs to the GreA/GreB family.

Its function is as follows. Necessary for efficient RNA polymerase transcription elongation past template-encoded arresting sites. The arresting sites in DNA have the property of trapping a certain fraction of elongating RNA polymerases that pass through, resulting in locked ternary complexes. Cleavage of the nascent transcript by cleavage factors such as GreA or GreB allows the resumption of elongation from the new 3'terminus. GreA releases sequences of 2 to 3 nucleotides. In Xylella fastidiosa (strain M23), this protein is Transcription elongation factor GreA.